The sequence spans 21 residues: Protein IroK (21 aa).

Functionally, possible increased expression of this protein (due to mutations upstream of the start codon) is proposed to be responsible for resistance to 3-hydroxypropionic acid (3-HP). The sequence is that of Protein IroK (iroK) from Escherichia coli (strain K12).